The sequence spans 80 residues: Putative membrane protein insertion efficiency factor (80 aa).

Belongs to the UPF0161 family.

It localises to the cell inner membrane. In terms of biological role, could be involved in insertion of integral membrane proteins into the membrane. The sequence is that of Putative membrane protein insertion efficiency factor from Kosmotoga olearia (strain ATCC BAA-1733 / DSM 21960 / TBF 19.5.1).